A 429-amino-acid polypeptide reads, in one-letter code: Glutamate-1-semialdehyde 2,1-aminomutase 1 (429 aa).

Residue Lys267 is modified to N6-(pyridoxal phosphate)lysine.

It belongs to the class-III pyridoxal-phosphate-dependent aminotransferase family. HemL subfamily. As to quaternary structure, homodimer. The cofactor is pyridoxal 5'-phosphate.

The protein localises to the cytoplasm. It catalyses the reaction (S)-4-amino-5-oxopentanoate = 5-aminolevulinate. The protein operates within porphyrin-containing compound metabolism; protoporphyrin-IX biosynthesis; 5-aminolevulinate from L-glutamyl-tRNA(Glu): step 2/2. The sequence is that of Glutamate-1-semialdehyde 2,1-aminomutase 1 from Bacillus velezensis (strain DSM 23117 / BGSC 10A6 / LMG 26770 / FZB42) (Bacillus amyloliquefaciens subsp. plantarum).